A 73-amino-acid polypeptide reads, in one-letter code: Conotoxin Bt11.1 (73 aa).

Positions methionine 1 to glycine 20 are cleaved as a signal peptide. Residues lysine 21–aspartate 35 constitute a propeptide that is removed on maturation. Intrachain disulfides connect cysteine 39–cysteine 53, cysteine 46–cysteine 58, cysteine 52–cysteine 63, and cysteine 57–cysteine 70.

This sequence belongs to the conotoxin I1 superfamily. In terms of tissue distribution, expressed by the venom duct.

It localises to the secreted. The sequence is that of Conotoxin Bt11.1 from Conus betulinus (Beech cone).